We begin with the raw amino-acid sequence, 105 residues long: Pyrimidine/purine nucleoside phosphorylase (105 aa).

Belongs to the nucleoside phosphorylase PpnP family.

The catalysed reaction is a purine D-ribonucleoside + phosphate = a purine nucleobase + alpha-D-ribose 1-phosphate. The enzyme catalyses adenosine + phosphate = alpha-D-ribose 1-phosphate + adenine. It catalyses the reaction cytidine + phosphate = cytosine + alpha-D-ribose 1-phosphate. It carries out the reaction guanosine + phosphate = alpha-D-ribose 1-phosphate + guanine. The catalysed reaction is inosine + phosphate = alpha-D-ribose 1-phosphate + hypoxanthine. The enzyme catalyses thymidine + phosphate = 2-deoxy-alpha-D-ribose 1-phosphate + thymine. It catalyses the reaction uridine + phosphate = alpha-D-ribose 1-phosphate + uracil. It carries out the reaction xanthosine + phosphate = alpha-D-ribose 1-phosphate + xanthine. Its function is as follows. Catalyzes the phosphorolysis of diverse nucleosides, yielding D-ribose 1-phosphate and the respective free bases. Can use uridine, adenosine, guanosine, cytidine, thymidine, inosine and xanthosine as substrates. Also catalyzes the reverse reactions. The polypeptide is Pyrimidine/purine nucleoside phosphorylase (Cupriavidus taiwanensis (strain DSM 17343 / BCRC 17206 / CCUG 44338 / CIP 107171 / LMG 19424 / R1) (Ralstonia taiwanensis (strain LMG 19424))).